Consider the following 226-residue polypeptide: Probable transcriptional regulatory protein y4xI (226 aa).

Residues 1-114 (MRTLLVDTDL…ELIARMRALL (114 aa)) enclose the Response regulatory domain. A DNA-binding region (ompR/PhoB-type) is located at residues 122-220 (CPIIEFGNLH…VRGIGYTLEL (99 aa)).

Its subcellular location is the cytoplasm. This is Probable transcriptional regulatory protein y4xI from Sinorhizobium fredii (strain NBRC 101917 / NGR234).